A 461-amino-acid polypeptide reads, in one-letter code: Flavin-containing monooxygenase FMO GS-OX4 (461 aa).

17-22 provides a ligand contact to FAD; that stretch reads GAGAAG. An NADP(+)-binding site is contributed by 211 to 216; sequence GNFASG.

Belongs to the FMO family.

The enzyme catalyses a (Z)-omega-(methylsulfanyl)-N-sulfo-alkylhydroximate S-glucoside + NADPH + O2 + H(+) = a (Z)-omega-(methylsulfinyl)-alkyl-glucosinolate + NADP(+) + H2O. Its function is as follows. Catalyzes the conversion of methylthioalkyl glucosinolates of any chain length into methylsulfinylalkyl glucosinolates. In Arabidopsis thaliana (Mouse-ear cress), this protein is Flavin-containing monooxygenase FMO GS-OX4 (FMOGS-OX4).